The chain runs to 664 residues: UvrABC system protein B (664 aa).

The 146-residue stretch at N25–E170 folds into the Helicase ATP-binding domain. An ATP-binding site is contributed by G38–T45. The short motif at Y91–I114 is the Beta-hairpin element. The Helicase C-terminal domain occupies Q429–L595. Residues K622–K657 enclose the UVR domain.

Belongs to the UvrB family. As to quaternary structure, forms a heterotetramer with UvrA during the search for lesions. Interacts with UvrC in an incision complex.

Its subcellular location is the cytoplasm. Its function is as follows. The UvrABC repair system catalyzes the recognition and processing of DNA lesions. A damage recognition complex composed of 2 UvrA and 2 UvrB subunits scans DNA for abnormalities. Upon binding of the UvrA(2)B(2) complex to a putative damaged site, the DNA wraps around one UvrB monomer. DNA wrap is dependent on ATP binding by UvrB and probably causes local melting of the DNA helix, facilitating insertion of UvrB beta-hairpin between the DNA strands. Then UvrB probes one DNA strand for the presence of a lesion. If a lesion is found the UvrA subunits dissociate and the UvrB-DNA preincision complex is formed. This complex is subsequently bound by UvrC and the second UvrB is released. If no lesion is found, the DNA wraps around the other UvrB subunit that will check the other stand for damage. The chain is UvrABC system protein B from Borreliella afzelii (strain PKo) (Borrelia afzelii).